A 254-amino-acid polypeptide reads, in one-letter code: Uracil-DNA glycosylase (254 aa).

Catalysis depends on D91, which acts as the Proton acceptor.

This sequence belongs to the uracil-DNA glycosylase (UDG) superfamily. UNG family.

The protein localises to the host nucleus. The catalysed reaction is Hydrolyzes single-stranded DNA or mismatched double-stranded DNA and polynucleotides, releasing free uracil.. Its function is as follows. Excises uracil residues from the DNA which can arise as a result of misincorporation of dUMP residues by DNA polymerase or deamination of cytosines. Therefore may reduce deleterious uracil incorporation into the viral genome, particularly in terminally differentiated cells which lack DNA repair enzymes. This is Uracil-DNA glycosylase (U81) from Homo sapiens (Human).